We begin with the raw amino-acid sequence, 64 residues long: Probable tautomerase lp_1712 (64 aa).

Pro-2 (proton acceptor; via imino nitrogen) is an active-site residue.

It belongs to the 4-oxalocrotonate tautomerase family.

In Lactiplantibacillus plantarum (strain ATCC BAA-793 / NCIMB 8826 / WCFS1) (Lactobacillus plantarum), this protein is Probable tautomerase lp_1712.